A 363-amino-acid polypeptide reads, in one-letter code: Protein-arginine kinase (363 aa).

Residues Ile24 to Ala254 enclose the Phosphagen kinase C-terminal domain. ATP-binding positions include Ser27–Arg31, His92, Arg125, Arg176–Met180, and Arg207–Glu212. The RDXXRA motif of the pArg binding pocket involved in allosteric regulation signature appears at Arg337 to Ala342.

The protein belongs to the ATP:guanido phosphotransferase family.

The enzyme catalyses L-arginyl-[protein] + ATP = N(omega)-phospho-L-arginyl-[protein] + ADP + H(+). With respect to regulation, appears to be allosterically activated by the binding of pArg-containing polypeptides to the pArg-binding pocket localized in the C-terminal domain of McsB. Catalyzes the specific phosphorylation of arginine residues in a large number of proteins. Is part of the bacterial stress response system. Protein arginine phosphorylation has a physiologically important role and is involved in the regulation of many critical cellular processes, such as protein homeostasis, motility, competence, and stringent and stress responses, by regulating gene expression and protein activity. This chain is Protein-arginine kinase, found in Bacillus pumilus (strain SAFR-032).